A 203-amino-acid chain; its full sequence is Ribosome maturation factor RimP (203 aa).

The segment at 184 to 203 (RRGSAPVEDEEGEGEAPTAH) is disordered.

The protein belongs to the RimP family.

Its subcellular location is the cytoplasm. In terms of biological role, required for maturation of 30S ribosomal subunits. This chain is Ribosome maturation factor RimP, found in Methylobacterium nodulans (strain LMG 21967 / CNCM I-2342 / ORS 2060).